The sequence spans 141 residues: Acetyltransferase ECA0875 (141 aa).

Residues 1–141 (MEIRIFRQDD…GKRLIEDREY (141 aa)) form the N-acetyltransferase domain.

The protein belongs to the acetyltransferase family. YpeA subfamily.

This chain is Acetyltransferase ECA0875, found in Pectobacterium atrosepticum (strain SCRI 1043 / ATCC BAA-672) (Erwinia carotovora subsp. atroseptica).